We begin with the raw amino-acid sequence, 326 residues long: Peroxidase 39 (326 aa).

A signal peptide spans 1–23 (MTRFGLALLMILVIQGLVTFSEA). Disulfide bonds link cysteine 34/cysteine 114, cysteine 67/cysteine 72, cysteine 120/cysteine 322, and cysteine 199/cysteine 232. The active-site Proton acceptor is histidine 65. Ca(2+) is bound by residues aspartate 66, valine 69, glycine 71, aspartate 73, and serine 75. The N-linked (GlcNAc...) asparagine glycan is linked to asparagine 79. Substrate is bound at residue proline 162. The N-linked (GlcNAc...) asparagine glycan is linked to asparagine 167. Residue histidine 192 participates in heme b binding. Threonine 193 provides a ligand contact to Ca(2+). N-linked (GlcNAc...) asparagine glycosylation is found at asparagine 208 and asparagine 238. Ca(2+) is bound by residues aspartate 245, serine 248, and aspartate 253.

The protein belongs to the peroxidase family. Classical plant (class III) peroxidase subfamily. Heme b is required as a cofactor. Ca(2+) serves as cofactor. In terms of tissue distribution, slightly expressed in roots.

It localises to the secreted. It carries out the reaction 2 a phenolic donor + H2O2 = 2 a phenolic radical donor + 2 H2O. Its function is as follows. Removal of H(2)O(2), oxidation of toxic reductants, biosynthesis and degradation of lignin, suberization, auxin catabolism, response to environmental stresses such as wounding, pathogen attack and oxidative stress. These functions might be dependent on each isozyme/isoform in each plant tissue. The sequence is that of Peroxidase 39 (PER39) from Arabidopsis thaliana (Mouse-ear cress).